Here is a 383-residue protein sequence, read N- to C-terminus: Succinyl-diaminopimelate desuccinylase (383 aa).

A Zn(2+)-binding site is contributed by His-69. The active site involves Asp-71. Asp-103 contacts Zn(2+). Catalysis depends on Glu-137, which acts as the Proton acceptor. Zn(2+) is bound by residues Glu-138, Glu-166, and His-357.

This sequence belongs to the peptidase M20A family. DapE subfamily. In terms of assembly, homodimer. Zn(2+) is required as a cofactor. Requires Co(2+) as cofactor.

It catalyses the reaction N-succinyl-(2S,6S)-2,6-diaminopimelate + H2O = (2S,6S)-2,6-diaminopimelate + succinate. Its pathway is amino-acid biosynthesis; L-lysine biosynthesis via DAP pathway; LL-2,6-diaminopimelate from (S)-tetrahydrodipicolinate (succinylase route): step 3/3. Functionally, catalyzes the hydrolysis of N-succinyl-L,L-diaminopimelic acid (SDAP), forming succinate and LL-2,6-diaminopimelate (DAP), an intermediate involved in the bacterial biosynthesis of lysine and meso-diaminopimelic acid, an essential component of bacterial cell walls. The protein is Succinyl-diaminopimelate desuccinylase of Rickettsia typhi (strain ATCC VR-144 / Wilmington).